The primary structure comprises 736 residues: Protein DSF2 (736 aa).

The segment covering 1–10 (MNQNLKNTSW) has biased composition (polar residues). 4 disordered regions span residues 1 to 46 (MNQN…DSQF), 178 to 208 (SGMK…SPNP), 229 to 410 (ISDN…SGEN), and 440 to 461 (FKTA…ARPN). A compositionally biased stretch (basic and acidic residues) spans 14–24 (IGSDDQERKAN). 2 stretches are compositionally biased toward polar residues: residues 25-46 (SSEV…DSQF) and 197-208 (ENGNRSTNSPNP). Positions 238-256 (NNANSKNNRTTSNNINTST) are enriched in low complexity. Over residues 264–284 (KQSCPNEFTTTQKSNCLYRNG) the composition is skewed to polar residues. Low complexity-rich tracts occupy residues 285-294 (SSTSTNTSFS), 303-318 (KTQS…FSKL), and 335-350 (SNSS…TMTN). Positions 374-385 (KLFKSPRTRAKN) are enriched in basic residues. Positions 392 to 410 (EGSSPIRSATNSLDFSGEN) are enriched in polar residues.

The polypeptide is Protein DSF2 (DSF2) (Saccharomyces cerevisiae (strain ATCC 204508 / S288c) (Baker's yeast)).